Consider the following 216-residue polypeptide: Ras-related protein Rab-11A (216 aa).

Gly2 is subject to N-acetylglycine. Residues Ser20, Gly21, Val22, Gly23, Lys24, Ser25, Asn26, Asn37, Leu38, Ser40, Ser42, and Thr43 each coordinate GTP. Ser25 contributes to the Mg(2+) binding site. Positions 36 to 47 match the Switch 1 motif; the sequence is FNLESKSTIGVE. 2 residues coordinate Mg(2+): Thr43 and Asp66. The short motif at 67–86 is the Switch 2 element; sequence TAGQERYRAITSAYYRGAVG. GTP contacts are provided by Gly69, Asn124, Lys125, Asp127, Ala155, and Leu156. The interval 183–211 is disordered; the sequence is DRRENDMSPSNNVVPIHVPPTTENKPKVQ. S-geranylgeranyl cysteine attachment occurs at residues Cys212 and Cys213. A Cysteine methyl ester modification is found at Cys213. Positions 214–216 are cleaved as a propeptide — removed in mature form; sequence QNI.

Belongs to the small GTPase superfamily. Rab family. In terms of assembly, interacts (GTP-bound form) with RAB11FIPs (via their C-termini) including RAB11FIP1, RAB11FIP2, RAB11FIP3, RAB11FIP4 and RAB11FIP5 effectors. Forms a complex with RAB11FIP3 and dynein intermediate chain DYNC1LI1; the interaction between RAB11A1 and RAB11FIP3 is direct; the complex regulates endocytic trafficking. Interacts with EVI5; EVI5 and RAB11FIP3 may be mutually exclusive and compete for binding RAB11A. Interacts with SGSM1, SGSM2, SGSM3 and VIPAS39. Interacts with EXOC6 in a GTP-dependent manner. Interacts with RAB11FIP5. Interacts with STXBP6. Interacts (GDP-bound form) with ZFYVE27. Interacts with BIRC6/bruce. May interact with TBC1D14. Interacts with UNC119; in a cell cycle-dependent manner. GDP-bound and nucleotide-free forms interact with SH3BP5. Interacts (GDP-bound form) with KIF5A in a ZFYVE27-dependent manner. Interacts (GDP-bound form) with RELCH. Found in a complex composed of RELCH, OSBP1 and RAB11A. Interacts with TBC1D12. Interacts with DEF6. Interacts with ATP9A. Forms a heterotetramer with RAB11FIP3; the GTP-bound form is preferred for binding. Forms a complex with Rabin8/RAB3IP and RAB11FIP3, probably a heterohexamer with two of each protein subunit, where Rabin8/RAB3IP and RAB11FIP3 simultaneously bind to RAB11A; the complex promotes preciliary trafficking and cilia growth. Forms a complex containing RAB11A, ASAP1, Rabin8/RAB3IP, RAP11FIP3 and ARF4; the complex promotes preciliary trafficking; the complex binds to RHO in photoreceptor cells and promotes RHO ciliary transport. Interacts (GTP-bound form) with WDR44; the interaction prevents RAB11A-RAB3IP-RAB11FIP3 complex formation. Requires Mg(2+) as cofactor. In terms of tissue distribution, detected in various tissues, such as brain, testis, spleen, and heart.

It localises to the cell membrane. Its subcellular location is the endosome membrane. The protein localises to the recycling endosome membrane. It is found in the cleavage furrow. The protein resides in the cytoplasmic vesicle. It localises to the phagosome. Its subcellular location is the cytoplasmic vesicle membrane. The protein localises to the golgi apparatus. It is found in the trans-Golgi network. It catalyses the reaction GTP + H2O = GDP + phosphate + H(+). Regulated by guanine nucleotide exchange factors (GEFs) which promote the exchange of bound GDP for free GTP. Regulated by GTPase activating proteins (GAPs) which increase the GTP hydrolysis activity. Inhibited by GDP dissociation inhibitors (GDIs) which prevent Rab-GDP dissociation. The small GTPases Rab are key regulators of intracellular membrane trafficking, from the formation of transport vesicles to their fusion with membranes. Rabs cycle between an inactive GDP-bound form and an active GTP-bound form that is able to recruit to membranes different set of downstream effectors directly responsible for vesicle formation, movement, tethering and fusion. The small Rab GTPase RAB11A regulates endocytic recycling. Forms a functional Rab11/RAB11FIP3/dynein complex that regulates the movement of peripheral sorting endosomes (SE) along microtubule tracks toward the microtubule organizing center/centrosome, generating the endosomal recycling compartment (ERC). Acts as a major regulator of membrane delivery during cytokinesis. Together with MYO5B and RAB8A participates in epithelial cell polarization. Together with Rabin8/RAB3IP, RAB8A, the exocyst complex, PARD3, PRKCI, ANXA2, CDC42 and DNMBP promotes transcytosis of PODXL to the apical membrane initiation sites (AMIS), apical surface formation and lumenogenesis. Together with MYO5B participates in CFTR trafficking to the plasma membrane and TF (Transferrin) recycling in nonpolarized cells. Required in a complex with MYO5B and RAB11FIP2 for the transport of NPC1L1 to the plasma membrane. Participates in the sorting and basolateral transport of CDH1 from the Golgi apparatus to the plasma membrane. Regulates the recycling of FCGRT (receptor of Fc region of monomeric IgG) to basolateral membranes. May also play a role in melanosome transport and release from melanocytes. Promotes Rabin8/RAB3IP preciliary vesicular trafficking to mother centriole by forming a ciliary targeting complex containing Rab11, ASAP1, Rabin8/RAB3IP, RAB11FIP3 and ARF4, thereby regulating ciliogenesis initiation. On the contrary, upon LPAR1 receptor signaling pathway activation, interaction with phosphorylated WDR44 prevents Rab11-RAB3IP-RAB11FIP3 complex formation and cilia growth. Participates in the export of a subset of neosynthesized proteins through a Rab8-Rab10-Rab11-endososomal dependent export route via interaction with WDR44. The sequence is that of Ras-related protein Rab-11A from Rattus norvegicus (Rat).